Reading from the N-terminus, the 55-residue chain is Photosystem I reaction center subunit IX (55 aa).

Residues 7–27 form a helical membrane-spanning segment; the sequence is YLSVAPVLSTLWFGSLAGLLI.

It belongs to the PsaJ family.

The protein resides in the plastid. It is found in the chloroplast thylakoid membrane. Functionally, may help in the organization of the PsaE and PsaF subunits. This is Photosystem I reaction center subunit IX from Gossypium barbadense (Sea Island cotton).